A 91-amino-acid chain; its full sequence is Protein xpaR7 (91 aa).

This Bacillus licheniformis protein is Protein xpaR7 (xpaR7).